The following is a 689-amino-acid chain: SH3 domain-binding protein 1 (689 aa).

Over residues 1–11 (MMKRQLHRMRQ) the composition is skewed to basic residues. Positions 1–24 (MMKRQLHRMRQLAHTGSSGRTPET) are disordered. The interaction with CGNL1 stretch occupies residues 1 to 275 (MMKRQLHRMR…TAAPFSRVYG (275 aa)). Positions 17–262 (SSGRTPETAE…RDNHSQADSS (246 aa)) constitute a BAR domain. Phosphoserine is present on residues Ser241 and Ser262. Positions 276 to 469 (VSLRTHLQDL…VLIQNADTLF (194 aa)) constitute a Rho-GAP domain. The interaction with CD2AP stretch occupies residues 470 to 689 (PGDINFSVSG…RPRGLISETD (220 aa)). The tract at residues 507 to 689 (TAATPTPTPA…RPRGLISETD (183 aa)) is disordered. Phosphoserine occurs at positions 539 and 545. A compositionally biased stretch (pro residues) spans 565–575 (PARPTMPPPQP). Residues 576–594 (SSSRSSPPALSLPAGSVSP) show a composition bias toward low complexity. Phosphoserine is present on Ser586. A Phosphothreonine modification is found at Thr596. The SH3-binding signature appears at 611–620 (APTVPPPLPP). Residues 613 to 625 (TVPPPLPPAPPQP) show a composition bias toward pro residues. Residue Ser641 is modified to Phosphoserine. The segment covering 670–680 (PPTPVLPPQPR) has biased composition (pro residues).

Interacts with RAC1. Interacts with the exocyst via EXOC4 and EXOC8; required for the localization of both SH3BP1 and the exocyst to the leading edge of migrating cells. Interacts with CD2AP and CGNL1; probably part of a complex at cell junctions. Interacts with CAPZA1; recruits CAPZA1 to forming cell junctions. May interact with AFDN. Interacts with PLXND1; they dissociate upon SEMA3E binding to PLXND1 allowing SH3BP1 to transduce downstream signal through RAC1 inactivation. Interacts with ABL1, GRB2 and SRC (via SH3 domain).

Its subcellular location is the cell projection. It localises to the cell junction. It is found in the tight junction. The protein resides in the adherens junction. The protein localises to the phagocytic cup. Its subcellular location is the nucleus. It localises to the cytoplasm. It is found in the cytosol. In terms of biological role, GTPase activating protein/GAP which specifically converts GTP-bound Rho-type GTPases including RAC1 and CDC42 in their inactive GDP-bound form. By specifically inactivating RAC1 at the leading edge of migrating cells, it regulates the spatiotemporal organization of cell protrusions which is important for proper cell migration. Also negatively regulates CDC42 in the process of actin remodeling and the formation of epithelial cell junctions. Through its GAP activity toward RAC1 and/or CDC42 plays a specific role in phagocytosis of large particles. Specifically recruited by a PI3 kinase/PI3K-dependent mechanism to sites of large particles engagement, inactivates RAC1 and/or CDC42 allowing the reorganization of the underlying actin cytoskeleton required for engulfment. It also plays a role in angiogenesis and the process of repulsive guidance as part of a semaphorin-plexin signaling pathway. Following the binding of PLXND1 to extracellular SEMA3E it dissociates from PLXND1 and inactivates RAC1, inducing the intracellular reorganization of the actin cytoskeleton and the collapse of cells. In Rattus norvegicus (Rat), this protein is SH3 domain-binding protein 1.